Here is an 80-residue protein sequence, read N- to C-terminus: Exodeoxyribonuclease 7 small subunit (80 aa).

Belongs to the XseB family. Heterooligomer composed of large and small subunits.

It is found in the cytoplasm. The catalysed reaction is Exonucleolytic cleavage in either 5'- to 3'- or 3'- to 5'-direction to yield nucleoside 5'-phosphates.. Functionally, bidirectionally degrades single-stranded DNA into large acid-insoluble oligonucleotides, which are then degraded further into small acid-soluble oligonucleotides. In Edwardsiella ictaluri (strain 93-146), this protein is Exodeoxyribonuclease 7 small subunit.